Here is a 323-residue protein sequence, read N- to C-terminus: Ankyrin repeat and SOCS box protein 11 (323 aa).

6 ANK repeats span residues 64-93 (ADRS…NVNL), 97-126 (NRVS…HVNG), 130-159 (HGAT…KAQL), 162-191 (HLAS…NIDH), 195-224 (QLGT…SVDH), and 227-256 (WLDT…NLKR). The region spanning 273 to 323 (SVEQALLLREGPPALSQLCRLCVRKCLGRACHQAIHKLHLPEPLERFLLYQ) is the SOCS box domain.

The protein belongs to the ankyrin SOCS box (ASB) family. Substrate-recognition component of the ECS(ASB11) complex, composed of ASB11, CUL5, ELOB, ELOC and RNF7/RBX2.

It localises to the endoplasmic reticulum. It functions in the pathway protein modification; protein ubiquitination. In terms of biological role, substrate-recognition component of a cullin-5-RING E3 ubiquitin-protein ligase complex (ECS complex, also named CRL5 complex), which mediates the ubiquitination and subsequent proteasomal degradation of target proteins, such as BIK, DIRAS2 and RPN1. The ECS(ASB11) complex acts as a regulator of the endoplasmic reticulum unfolded protein response by mediating ubiquitination and degradation of BIK. This is Ankyrin repeat and SOCS box protein 11 from Homo sapiens (Human).